Here is a 444-residue protein sequence, read N- to C-terminus: Proline--tRNA ligase (444 aa).

It belongs to the class-II aminoacyl-tRNA synthetase family. ProS type 2 subfamily. In terms of assembly, homodimer.

Its subcellular location is the cytoplasm. It catalyses the reaction tRNA(Pro) + L-proline + ATP = L-prolyl-tRNA(Pro) + AMP + diphosphate. Catalyzes the attachment of proline to tRNA(Pro) in a two-step reaction: proline is first activated by ATP to form Pro-AMP and then transferred to the acceptor end of tRNA(Pro). This Maricaulis maris (strain MCS10) (Caulobacter maris) protein is Proline--tRNA ligase.